Reading from the N-terminus, the 467-residue chain is Glutamate--tRNA ligase (467 aa).

The 'HIGH' region motif lies at proline 13 to glycine 23. Over residues alanine 118–proline 133 the composition is skewed to basic and acidic residues. The interval alanine 118–proline 141 is disordered. The short motif at lysine 245–arginine 249 is the 'KMSKS' region element. Lysine 248 serves as a coordination point for ATP.

This sequence belongs to the class-I aminoacyl-tRNA synthetase family. Glutamate--tRNA ligase type 1 subfamily. In terms of assembly, monomer.

It localises to the cytoplasm. The catalysed reaction is tRNA(Glu) + L-glutamate + ATP = L-glutamyl-tRNA(Glu) + AMP + diphosphate. In terms of biological role, catalyzes the attachment of glutamate to tRNA(Glu) in a two-step reaction: glutamate is first activated by ATP to form Glu-AMP and then transferred to the acceptor end of tRNA(Glu). In Bordetella avium (strain 197N), this protein is Glutamate--tRNA ligase.